A 188-amino-acid polypeptide reads, in one-letter code: Gag polyprotein (188 aa).

The span at 77–90 (VGETTVQRDAKMAP) shows a compositional bias: basic and acidic residues. The disordered stretch occupies residues 77-99 (VGETTVQRDAKMAPEETATPKTV). Positions 121-124 (PPPY) match the PPXY motif motif. The tract at residues 130-166 (YPSLAGVGEQQGQGGDTPRGAEQPRAEPGHAGLAPGP) is disordered.

In terms of processing, specific enzymatic cleavages in vivo yield mature proteins.

Its subcellular location is the virion. The polypeptide is Gag polyprotein (ev-2) (Galliformes (EV-2)).